Consider the following 231-residue polypeptide: Probable GTP-binding protein EngB (231 aa).

One can recognise an EngB-type G domain in the interval 51–231; it reads DLSEIAFAGR…RAQLAALASP (181 aa). Residues 59-66, 86-90, 109-112, 176-179, and 210-212 each bind GTP; these read GRSNVGKS, GRTQE, DLPG, TKAD, and TSS. Residues Ser-66 and Thr-88 each contribute to the Mg(2+) site.

The protein belongs to the TRAFAC class TrmE-Era-EngA-EngB-Septin-like GTPase superfamily. EngB GTPase family. Mg(2+) is required as a cofactor.

Necessary for normal cell division and for the maintenance of normal septation. This chain is Probable GTP-binding protein EngB, found in Rhodospirillum rubrum (strain ATCC 11170 / ATH 1.1.1 / DSM 467 / LMG 4362 / NCIMB 8255 / S1).